The primary structure comprises 459 residues: Zinc finger protein ZFP2 (459 aa).

C2H2-type zinc fingers lie at residues 100-122, 128-150, 156-178, 184-206, 212-234, 240-262, 268-290, 296-318, 324-346, 352-374, 380-402, 408-430, and 436-458; these read YGCD…QRIH, YTCN…QRTH, YKCH…QRTH, YQCK…ERIH, YECN…QRSH, YECS…QRNH, YKCN…QRLH, FECN…RRIH, YECM…QVIH, YECT…QRIH, YECD…QRIH, and YQCN…QRTH.

It belongs to the krueppel C2H2-type zinc-finger protein family.

It is found in the nucleus. Functionally, probable transcription factor involved in neuronal differentiation and/or phenotypic maintenance. The protein is Zinc finger protein ZFP2 (Zfp2) of Mus musculus (Mouse).